Reading from the N-terminus, the 348-residue chain is Cuticle collagen rol-6 (348 aa).

Residues 76-348 are disordered; that stretch reads GYGATGVQPP…SARRHRKFQL (273 aa). Gly residues predominate over residues 120 to 137; the sequence is PGGGFPDGPFPNGGGPRG. Triple-helical region stretches follow at residues 152–178, 196–258, 261–284, and 288–323; these read GPAG…DGKD, GPLG…DGER, GRPG…TGRD, and GQSG…PGKD. The span at 194 to 231 shows a compositional bias: low complexity; the sequence is PQGPLGPQGPNGAPGLRGMRGARGQPGRPGRDGNPGMP. Gly residues predominate over residues 297-306; it reads GLQGYGGAAG. Residues 322–338 show a composition bias toward basic and acidic residues; sequence KDAEYCKCPGREGDAGR. Residues 339-348 show a composition bias toward basic residues; that stretch reads SARRHRKFQL.

This sequence belongs to the cuticular collagen family. Collagen polypeptide chains are complexed within the cuticle by disulfide bonds and other types of covalent cross-links. In terms of tissue distribution, localizes in stripes along the alae.

Its function is as follows. Nematode cuticles are composed largely of collagen-like proteins. The cuticle functions both as an exoskeleton and as a barrier to protect the worm from its environment. May play a role in cuticle remodeling in response to the environment. Involved in body morphogenesis. The protein is Cuticle collagen rol-6 (rol-6) of Caenorhabditis elegans.